A 288-amino-acid polypeptide reads, in one-letter code: Pantothenate synthetase (288 aa).

ATP is bound at residue 30–37 (MGNLHNGH). Catalysis depends on His-37, which acts as the Proton donor. Gln-61 contacts (R)-pantoate. Gln-61 serves as a coordination point for beta-alanine. Residue 149-152 (GQKD) participates in ATP binding. A (R)-pantoate-binding site is contributed by Gln-155. Residues Val-178 and 186–189 (LSSR) contribute to the ATP site.

Belongs to the pantothenate synthetase family. Homodimer.

It is found in the cytoplasm. It carries out the reaction (R)-pantoate + beta-alanine + ATP = (R)-pantothenate + AMP + diphosphate + H(+). It participates in cofactor biosynthesis; (R)-pantothenate biosynthesis; (R)-pantothenate from (R)-pantoate and beta-alanine: step 1/1. Functionally, catalyzes the condensation of pantoate with beta-alanine in an ATP-dependent reaction via a pantoyl-adenylate intermediate. In Tolumonas auensis (strain DSM 9187 / NBRC 110442 / TA 4), this protein is Pantothenate synthetase.